The sequence spans 480 residues: Glycerol-3-phosphate transporter (480 aa).

At 1-36 the chain is on the cytoplasmic side; that stretch reads MFGPFKPAPHIAELPAEKIDSTYKRLRWQVFAGIFF. The chain crosses the membrane as a helical span at residues 37–57; sequence GYAAYYFVRANFDLAQPGLIQ. The Periplasmic portion of the chain corresponds to 58–64; the sequence is AGLYSKA. The chain crosses the membrane as a helical span at residues 65–85; sequence ELGVIGSAAGLAYGLSKFVMA. Topologically, residues 86–94 are cytoplasmic; sequence GMSDRSNPR. Residues 95 to 113 traverse the membrane as a helical segment; it reads VFLPFGLLLSGLCMTLMGL. Topologically, residues 114–121 are periplasmic; that stretch reads FPWATSGI. Residues 122–142 traverse the membrane as a helical segment; that stretch reads AIMWVMIFLNGWFQGMGWPPC. Residues 143 to 161 lie on the Cytoplasmic side of the membrane; it reads GRTMVHWWSKSERGTIVSI. The chain crosses the membrane as a helical span at residues 162–181; it reads WNTAHNIGGMVPGAMVLLAS. The Periplasmic segment spans residues 182–201; it reads AIFFSTHGIEAQAKDVWQQS. A helical transmembrane segment spans residues 202–219; that stretch reads LYFPGIAAMIFAIPVYFV. At 220 to 274 the chain is on the cytoplasmic side; it reads MRDTPQSCGLPSIEKWRNDYPDDYNEKTYENDLTAKEIFVTYVLKNKLLWYIAIA. The helical transmembrane segment at 275–295 threads the bilayer; the sequence is NVFVYLIRYGVLKWSPVYLSE. Topologically, residues 296-300 are periplasmic; the sequence is VKHFN. Residues 301 to 321 traverse the membrane as a helical segment; the sequence is IKGTAWAYTIYELAAVPGTLL. The Cytoplasmic portion of the chain corresponds to 322-334; sequence CGWVSDKVFKGKR. Residues 335-354 traverse the membrane as a helical segment; the sequence is GLTGFIFMILTTAAVVAYWM. Topologically, residues 355 to 359 are periplasmic; that stretch reads NPATP. A helical membrane pass occupies residues 360–396; it reads EAELANYSAWYENPYQLTDFVLMTLIGFLIYGPVMLI. The Cytoplasmic portion of the chain corresponds to 397-415; that stretch reads GLHALELAPKKAAGTAAGF. A helical membrane pass occupies residues 416 to 437; the sequence is TGLFGYLGGTVSASAVIGWAAQ. The Periplasmic portion of the chain corresponds to 438–442; that stretch reads HYGWD. The chain crosses the membrane as a helical span at residues 443-463; sequence GGFYVMIGGGVLAVLLLLIVM. Topologically, residues 464 to 479 are cytoplasmic; sequence VEEGKHKAKLGDTYGT.

It belongs to the major facilitator superfamily. Organophosphate:Pi antiporter (OPA) (TC 2.A.1.4) family.

The protein resides in the cell inner membrane. Its function is as follows. Responsible for glycerol-3-phosphate uptake. In Haemophilus influenzae (strain ATCC 51907 / DSM 11121 / KW20 / Rd), this protein is Glycerol-3-phosphate transporter (glpT).